A 448-amino-acid polypeptide reads, in one-letter code: MGLSPVNIFKPFGLGRAKAVIAAVSGGSDSLGLLFLLKDYLSTLESPPVLIAVTVDHKLRAESALEAENVGLLCQKHGIMHCVLSWDDPKPAHGLAAAARTARYRLLVQAARDAGAGFIVTGHTENDQIETFLMRKARSGHCEARGLAAMSPRSLLEGSVELARPLLTVSRQALRDELTRRGIAWVDDPSNANIDYERPRVRLGVAAEADGQEVLEQIAQAGAARERDNAALVEALADPATLGVDAAGMMFLNADCYAALSPGARQLFSGLLASIAGGRRFLPGDGERRRIERMLSGQDAPRRLTVFGALIERGEKGAPHRFRRERRNLPKLDLVPGQHIVWDGRFCFFNSGGRSFEIAPPGRQELIDFLKNSGRDIESRRCEALLISPALYEGGKLASVPFLPGAEWPQGVHIERHFAIFDHVLPGHDFALAQAVEARLGRACAEIS.

25 to 30 (SGGSDS) provides a ligand contact to ATP.

This sequence belongs to the tRNA(Ile)-lysidine synthase family.

The protein localises to the cytoplasm. The enzyme catalyses cytidine(34) in tRNA(Ile2) + L-lysine + ATP = lysidine(34) in tRNA(Ile2) + AMP + diphosphate + H(+). Its function is as follows. Ligates lysine onto the cytidine present at position 34 of the AUA codon-specific tRNA(Ile) that contains the anticodon CAU, in an ATP-dependent manner. Cytidine is converted to lysidine, thus changing the amino acid specificity of the tRNA from methionine to isoleucine. The sequence is that of tRNA(Ile)-lysidine synthase from Brucella canis (strain ATCC 23365 / NCTC 10854 / RM-666).